A 352-amino-acid polypeptide reads, in one-letter code: MQTYGNPSVTYDWYAGNSGTANRSGKFIAAHAAHAGLMMFWAGAFTLFELARYDSSVAMGNQNLICLPHLAQLGIGGIENGVITEPYGCTVIAVLHLIFSGVLGAGGILHSTRYDGDLGNYPEGSRPKKFDFEWDDPDKLTFILGHHLIFLGLANIQFVEWAQYHGIWDTALGATRTVSYNLDLGMIWNHQADFLQITSLEDVMGGHAFLAFFQIIGGAFHIITKQFGEYTEFKGKGLLSAEAVLSYSLAGVGYCALVAAFWSSTNTTVYSTEFFGEVLQLKFDFAPYFVDTDPSLAAGAHTARAWLANVHFYLGFFFIQGHLWHALRAMGFDFRRVGKAFDNMENAKITNG.

The next 6 membrane-spanning stretches (helical) occupy residues 27–47, 89–109, 142–162, 203–223, 243–263, and 307–327; these read FIAAHAAHAGLMMFWAGAFTL, CTVIAVLHLIFSGVLGAGGIL, FILGHHLIFLGLANIQFVEWA, VMGGHAFLAFFQIIGGAFHII, AVLSYSLAGVGYCALVAAFWS, and LANVHFYLGFFFIQGHLWHAL.

It belongs to the PsbB/PsbC family. IsiA/Pcb subfamily. As to quaternary structure, the antenna complex consists of divinyl chlorophylls (a and b) and divinyl chlorophyll a/b binding proteins and binds more divinyl chlorophyll b than does the antenna complex from high-light-adapted Prochlorococcus. Divinyl chlorophyll a serves as cofactor. Requires divinyl chlorophyll b as cofactor.

It localises to the cellular thylakoid membrane. The antenna complex functions as a light receptor, it captures and delivers excitation energy to photosystems II and I. The Prochlorales pcb genes are not related to higher plant LHCs. The sequence is that of Divinyl chlorophyll a/b light-harvesting protein PcbB (pcbB) from Prochlorococcus marinus (strain NATL2A).